Reading from the N-terminus, the 659-residue chain is RNA-binding E3 ubiquitin-protein ligase MEX3C (659 aa).

Residues 1 to 15 (MPSGSSAALALAAAP) show a composition bias toward low complexity. The segment at 1–140 (MPSGSSAALA…EEAEEEDRSS (140 aa)) is disordered. The span at 16–37 (APLPQPPPPPPPPPPPLPPPSG) shows a compositional bias: pro residues. Residues 64–82 (EPGAPALRAPAAAAQGQAR) show a composition bias toward low complexity. Residues 83–94 (RAAELSPEERAP) show a composition bias toward basic and acidic residues. Ser88 bears the Phosphoserine mark. A compositionally biased stretch (acidic residues) spans 104 to 137 (AELELEEDEEEGEEAELDGDLLEEEELEEAEEED). KH domains lie at 232–293 (TTEC…KREI) and 326–387 (QTTV…REEI). Positions 513-569 (FEPVNPLSGFGSDPSGNMKTQRRGSQPSTPRLSPTFPESIEHPLARRVRSDPPSTGN) are disordered. Polar residues predominate over residues 526–544 (PSGNMKTQRRGSQPSTPRL). Phosphoserine occurs at positions 537 and 545. The segment covering 551 to 562 (SIEHPLARRVRS) has biased composition (basic and acidic residues). The segment at 608–648 (CVICFENEVIAALVPCGHNLFCMECANKICEKRTPSCPVCQ) adopts an RING-type zinc-finger fold.

In terms of assembly, interacts with USP7, which antagonizes the ability to degrade mRNA. In terms of tissue distribution, highest levels found in fetal brain and testis. Also expressed in thymus, salivary gland and uterus. Highly expressed in cells of the innate immune system, in particular activated NK cells. Week expression in the intestine.

The protein localises to the cytoplasm. Its subcellular location is the nucleus. It catalyses the reaction S-ubiquitinyl-[E2 ubiquitin-conjugating enzyme]-L-cysteine + [acceptor protein]-L-lysine = [E2 ubiquitin-conjugating enzyme]-L-cysteine + N(6)-ubiquitinyl-[acceptor protein]-L-lysine.. In terms of biological role, E3 ubiquitin ligase responsible for the post-transcriptional regulation of common HLA-A allotypes. Binds to the 3' UTR of HLA-A2 mRNA, and regulates its levels by promoting mRNA decay. RNA binding is sufficient to prevent translation, but ubiquitin ligase activity is required for mRNA degradation. This Homo sapiens (Human) protein is RNA-binding E3 ubiquitin-protein ligase MEX3C (MEX3C).